Here is a 290-residue protein sequence, read N- to C-terminus: Signal recognition particle receptor FtsY (290 aa).

Residues glycine 91–threonine 98, aspartate 173–arginine 177, and threonine 237–aspartate 240 contribute to the GTP site.

The protein belongs to the GTP-binding SRP family. FtsY subfamily. In terms of assembly, part of the signal recognition particle protein translocation system, which is composed of SRP and FtsY.

It is found in the cell inner membrane. The protein localises to the cytoplasm. The catalysed reaction is GTP + H2O = GDP + phosphate + H(+). Its function is as follows. Involved in targeting and insertion of nascent membrane proteins into the cytoplasmic membrane. Acts as a receptor for the complex formed by the signal recognition particle (SRP) and the ribosome-nascent chain (RNC). The polypeptide is Signal recognition particle receptor FtsY (Chlamydia pneumoniae (Chlamydophila pneumoniae)).